Reading from the N-terminus, the 201-residue chain is Small ribosomal subunit protein uS4c (201 aa).

Positions 89–149 (MRLDNILFRL…DEQKSRALIQ (61 aa)) constitute an S4 RNA-binding domain.

The protein belongs to the universal ribosomal protein uS4 family. In terms of assembly, part of the 30S ribosomal subunit. Contacts protein S5. The interaction surface between S4 and S5 is involved in control of translational fidelity.

It is found in the plastid. The protein resides in the chloroplast. Its function is as follows. One of the primary rRNA binding proteins, it binds directly to 16S rRNA where it nucleates assembly of the body of the 30S subunit. In terms of biological role, with S5 and S12 plays an important role in translational accuracy. This Coffea arabica (Arabian coffee) protein is Small ribosomal subunit protein uS4c (rps4).